A 236-amino-acid chain; its full sequence is Small ribosomal subunit protein uS5 (236 aa).

The S5 DRBM domain occupies 61–124 (ENQEIIDIAL…NYAKLNIIEI (64 aa)).

The protein belongs to the universal ribosomal protein uS5 family. As to quaternary structure, part of the 30S ribosomal subunit. Contacts protein S4.

In terms of biological role, with S4 and S12 plays an important role in translational accuracy. This Pyrococcus horikoshii (strain ATCC 700860 / DSM 12428 / JCM 9974 / NBRC 100139 / OT-3) protein is Small ribosomal subunit protein uS5.